Consider the following 79-residue polypeptide: Conotoxin 1 (79 aa).

An N-terminal signal peptide occupies residues 1-22 (MKLTCVLIITVLFLTASQLITA). A propeptide spanning residues 23–46 (DYSRDQRQYRAVRLGDEMRTFKGA) is cleaved from the precursor. 3 disulfide bridges follow: cysteine 49/cysteine 62, cysteine 56/cysteine 67, and cysteine 61/cysteine 77.

The protein belongs to the conotoxin O1 superfamily. Expressed by the venom duct.

It localises to the secreted. The chain is Conotoxin 1 from Conus vexillum (Flag cone).